The chain runs to 423 residues: Guanine nucleotide-binding protein subunit beta (423 aa).

WD repeat units follow at residues 90-120 (GHNN…LIWD), 132-162 (LDSQ…TIYR), 179-208 (GHTC…ALWD), 220-256 (DHLG…YIWD), 268-298 (VNDS…NMYD), 348-377 (DNQG…VVWD), and 389-419 (GHGG…KIWS).

The protein belongs to the WD repeat G protein beta family. G proteins are composed of 3 units, alpha, beta and gamma. The beta-gamma subunit complex (STE4-STE18 complex) interacts with PLP1 and PLP2. Interacts with SYG1.

In terms of biological role, implicated in the a- and alpha-factor response pathway. The beta and gamma chains of the putative yeast mating response pathway G protein play a positive role in initiation of the mating response. The beta and gamma chains are required for the GTPase activity, for replacement of GDP by GTP, and for G protein-effector interaction. The sequence is that of Guanine nucleotide-binding protein subunit beta (STE4) from Saccharomyces cerevisiae (strain ATCC 204508 / S288c) (Baker's yeast).